Here is a 432-residue protein sequence, read N- to C-terminus: Adenylosuccinate synthetase (432 aa).

Residues 13–19 and 41–43 contribute to the GTP site; these read GDEGKGK and GHT. Asp-14 functions as the Proton acceptor in the catalytic mechanism. Positions 14 and 41 each coordinate Mg(2+). IMP contacts are provided by residues 14 to 17, 39 to 42, Thr-130, Arg-144, Gln-225, Thr-240, and Arg-304; these read DEGK and NAGH. His-42 functions as the Proton donor in the catalytic mechanism. Substrate is bound at residue 300–306; sequence AVTGRPR. Residues Arg-306, 332 to 334, and 415 to 417 each bind GTP; these read KLD and STG.

This sequence belongs to the adenylosuccinate synthetase family. Homodimer. The cofactor is Mg(2+).

The protein localises to the cytoplasm. The enzyme catalyses IMP + L-aspartate + GTP = N(6)-(1,2-dicarboxyethyl)-AMP + GDP + phosphate + 2 H(+). It functions in the pathway purine metabolism; AMP biosynthesis via de novo pathway; AMP from IMP: step 1/2. Plays an important role in the de novo pathway of purine nucleotide biosynthesis. Catalyzes the first committed step in the biosynthesis of AMP from IMP. The polypeptide is Adenylosuccinate synthetase (Haemophilus influenzae (strain PittGG)).